Consider the following 777-residue polypeptide: Polyribonucleotide nucleotidyltransferase (777 aa).

Mg(2+) is bound by residues Asp-494 and Asp-500. The KH domain maps to 561–620 (PRIITLQIDPSKIGALIGPGGKTIRSIIEQTGAQIDVEDDGRVFVTTPDADGARMAQSLI). Residues 630–699 (GEIFTGKVVR…GTGKLSLSRR (70 aa)) form the S1 motif domain. The interval 703–777 (TGETAEQRKS…NDRRGGGFRG (75 aa)) is disordered. Residues 718 to 727 (GPRGGGGGGD) are compositionally biased toward gly residues. Basic and acidic residues-rich tracts occupy residues 728–761 (RGPR…DRGP) and 768–777 (NDRRGGGFRG).

It belongs to the polyribonucleotide nucleotidyltransferase family. The cofactor is Mg(2+).

It is found in the cytoplasm. It carries out the reaction RNA(n+1) + phosphate = RNA(n) + a ribonucleoside 5'-diphosphate. In terms of biological role, involved in mRNA degradation. Catalyzes the phosphorolysis of single-stranded polyribonucleotides processively in the 3'- to 5'-direction. In Herpetosiphon aurantiacus (strain ATCC 23779 / DSM 785 / 114-95), this protein is Polyribonucleotide nucleotidyltransferase.